Reading from the N-terminus, the 267-residue chain is Protein HesA, heterocyst (267 aa).

The protein belongs to the HesA/MoeB/ThiF family.

In Trichormus variabilis (strain ATCC 29413 / PCC 7937) (Anabaena variabilis), this protein is Protein HesA, heterocyst (hesA1).